We begin with the raw amino-acid sequence, 282 residues long: ATP synthase gamma chain (282 aa).

The protein belongs to the ATPase gamma chain family. As to quaternary structure, F-type ATPases have 2 components, CF(1) - the catalytic core - and CF(0) - the membrane proton channel. CF(1) has five subunits: alpha(3), beta(3), gamma(1), delta(1), epsilon(1). CF(0) has three main subunits: a, b and c.

The protein localises to the cell membrane. Produces ATP from ADP in the presence of a proton gradient across the membrane. The gamma chain is believed to be important in regulating ATPase activity and the flow of protons through the CF(0) complex. The chain is ATP synthase gamma chain from Clostridium acetobutylicum (strain ATCC 824 / DSM 792 / JCM 1419 / IAM 19013 / LMG 5710 / NBRC 13948 / NRRL B-527 / VKM B-1787 / 2291 / W).